A 455-amino-acid chain; its full sequence is Phosphoglucosamine mutase (455 aa).

Serine 102 serves as the catalytic Phosphoserine intermediate. Mg(2+)-binding residues include serine 102, aspartate 241, aspartate 243, and aspartate 245. At serine 102 the chain carries Phosphoserine.

The protein belongs to the phosphohexose mutase family. Requires Mg(2+) as cofactor. Activated by phosphorylation.

The catalysed reaction is alpha-D-glucosamine 1-phosphate = D-glucosamine 6-phosphate. In terms of biological role, catalyzes the conversion of glucosamine-6-phosphate to glucosamine-1-phosphate. In Legionella pneumophila (strain Paris), this protein is Phosphoglucosamine mutase.